Consider the following 86-residue polypeptide: Large ribosomal subunit protein bL28 (86 aa).

It belongs to the bacterial ribosomal protein bL28 family.

This chain is Large ribosomal subunit protein bL28, found in Phocaeicola vulgatus (strain ATCC 8482 / DSM 1447 / JCM 5826 / CCUG 4940 / NBRC 14291 / NCTC 11154) (Bacteroides vulgatus).